The chain runs to 136 residues: Glutamyl-tRNA(Gln) amidotransferase subunit C, mitochondrial (136 aa).

The N-terminal 27 residues, 1–27 (MWARAVHLGLRAAARGRRGFTSKADPQ), are a transit peptide targeting the mitochondrion.

It belongs to the GatC family. As to quaternary structure, subunit of the heterotrimeric GatCAB amidotransferase (AdT) complex, composed of A (QRSL1), B (GATB) and C (GATC) subunits.

The protein localises to the mitochondrion. It catalyses the reaction L-glutamyl-tRNA(Gln) + L-glutamine + ATP + H2O = L-glutaminyl-tRNA(Gln) + L-glutamate + ADP + phosphate + H(+). Allows the formation of correctly charged Gln-tRNA(Gln) through the transamidation of misacylated Glu-tRNA(Gln) in the mitochondria. The reaction takes place in the presence of glutamine and ATP through an activated gamma-phospho-Glu-tRNA(Gln). The chain is Glutamyl-tRNA(Gln) amidotransferase subunit C, mitochondrial from Bos taurus (Bovine).